Here is a 1290-residue protein sequence, read N- to C-terminus: Vacuolating cytotoxin autotransporter (1290 aa).

The first 33 residues, 1–33, serve as a signal peptide directing secretion; it reads MEIQQTHRKINRPLVSLALVGALVSITPQQSHA. Residues 326–374 are disordered; the sequence is PPEGGYKDKPKDKPSNTTQNNANNNQQNSAQNNSNTQVINPPNSAQKTE. Over residues 330 to 339 the composition is skewed to basic and acidic residues; the sequence is GYKDKPKDKP. The segment covering 340–362 has biased composition (low complexity); that stretch reads SNTTQNNANNNQQNSAQNNSNTQ. Over residues 363–374 the composition is skewed to polar residues; the sequence is VINPPNSAQKTE. Positions 1018-1290 constitute an Autotransporter domain; it reads KYEKPTNVWA…ASNLGMRYSF (273 aa).

The protein resides in the periplasm. Its subcellular location is the secreted. The protein localises to the cell surface. It is found in the cell outer membrane. Its function is as follows. Induces vacuolation of eukaryotic cells. Causes ulceration and gastric lesions. The polypeptide is Vacuolating cytotoxin autotransporter (vacA) (Helicobacter pylori (strain ATCC 700392 / 26695) (Campylobacter pylori)).